The following is a 547-amino-acid chain: CTP synthase (547 aa).

Positions 1 to 265 are amidoligase domain; it reads MTKFVFVTGG…DRIVCEKLAL (265 aa). Ser13 provides a ligand contact to CTP. A UTP-binding site is contributed by Ser13. Residues 14–19 and Asp71 contribute to the ATP site; that span reads SLGKGI. Mg(2+)-binding residues include Asp71 and Glu139. Residues 146–148, 186–191, and Lys222 each bind CTP; these read DIE and KTKPTQ. Residues 186 to 191 and Lys222 contribute to the UTP site; that span reads KTKPTQ. The Glutamine amidotransferase type-1 domain maps to 290–542; sequence TIGMVGKYVD…IKAALAHKHA (253 aa). L-glutamine is bound at residue Gly351. Cys378 serves as the catalytic Nucleophile; for glutamine hydrolysis. L-glutamine-binding positions include 379–382, Glu402, and Arg468; that span reads LGMQ. Residues His515 and Glu517 contribute to the active site.

This sequence belongs to the CTP synthase family. As to quaternary structure, homotetramer.

It carries out the reaction UTP + L-glutamine + ATP + H2O = CTP + L-glutamate + ADP + phosphate + 2 H(+). The catalysed reaction is L-glutamine + H2O = L-glutamate + NH4(+). The enzyme catalyses UTP + NH4(+) + ATP = CTP + ADP + phosphate + 2 H(+). Its pathway is pyrimidine metabolism; CTP biosynthesis via de novo pathway; CTP from UDP: step 2/2. Its activity is regulated as follows. Allosterically activated by GTP, when glutamine is the substrate; GTP has no effect on the reaction when ammonia is the substrate. The allosteric effector GTP functions by stabilizing the protein conformation that binds the tetrahedral intermediate(s) formed during glutamine hydrolysis. Inhibited by the product CTP, via allosteric rather than competitive inhibition. Functionally, catalyzes the ATP-dependent amination of UTP to CTP with either L-glutamine or ammonia as the source of nitrogen. Regulates intracellular CTP levels through interactions with the four ribonucleotide triphosphates. The sequence is that of CTP synthase from Janthinobacterium sp. (strain Marseille) (Minibacterium massiliensis).